We begin with the raw amino-acid sequence, 473 residues long: Venom prothrombin activator vestarin-D1 (473 aa).

The signal sequence occupies residues 1 to 20; sequence MAPQLLLCLIQTFLWSLPEA. The propeptide occupies 21–40; the sequence is ESNVFLKSNVANRFLQRTKR. In terms of domain architecture, Gla spans 41–86; the sequence is ANSGFEEIYPANFERECVEERCSKEEAREVFEDDEKTEAFWTVYVD. 4-carboxyglutamate is present on residues glutamate 46, glutamate 47, glutamate 54, glutamate 56, glutamate 59, glutamate 60, glutamate 65, glutamate 66, glutamate 69, glutamate 72, and glutamate 75. Cysteines 57 and 62 form a disulfide. Positions 86-122 constitute an EGF-like 1; calcium-binding domain; the sequence is DGDQCLSNPCHYGGTCKDGIGSYTCTCLAGYEGKNCE. Disulfide bonds link cysteine 90–cysteine 101, cysteine 95–cysteine 110, cysteine 112–cysteine 121, cysteine 129–cysteine 140, cysteine 136–cysteine 149, cysteine 151–cysteine 164, cysteine 172–cysteine 335, cysteine 235–cysteine 240, cysteine 383–cysteine 397, and cysteine 408–cysteine 436. Serine 92 is a glycosylation site (O-linked (Hex...) serine). Residues 129 to 164 enclose the EGF-like 2 domain; that stretch reads CRVDNGNCWHFCKPVQNDTQCSCAEGYRLGDNGFSC. Residues 182-228 constitute a propeptide, activation peptide; it reads REASLPDFQTDFSDDYDAIDENNLIETVQSQSATLLKKSDNPNPDIR. The 232-residue stretch at 229 to 460 folds into the Peptidase S1 domain; that stretch reads IVNGLDCKLG…FLPWIKTIMR (232 aa). Catalysis depends on histidine 270, which acts as the Charge relay system. Residue asparagine 273 is glycosylated (N-linked (GlcNAc...) asparagine). Residue aspartate 315 is the Charge relay system of the active site. Serine 412 serves as the catalytic Charge relay system.

The protein belongs to the peptidase S1 family. Snake venom subfamily. Heterodimer of a light chain and a heavy chain; disulfide-linked. In terms of processing, the vitamin K-dependent, enzymatic carboxylation of some glutamate residues allows the modified protein to bind calcium. As to expression, expressed by the venom gland.

The protein resides in the secreted. It catalyses the reaction Selective cleavage of Arg-|-Thr and then Arg-|-Ile bonds in prothrombin to form thrombin.. Its function is as follows. Snake prothrombin activator that attacks the hemostatic system of prey. This protein is functionally similar to blood coagulation factor Xa. This Demansia vestigiata (Lesser black whip snake) protein is Venom prothrombin activator vestarin-D1.